The following is a 235-amino-acid chain: Casparian strip membrane protein 2 (235 aa).

The Cytoplasmic portion of the chain corresponds to 1-70 (MTSESATVIQ…RSGAEGFRRC (70 aa)). Residues 71–91 (LAVIDFLLRVAAFGPTLAAAI) traverse the membrane as a helical segment. The Extracellular segment spans residues 92-118 (STGTADERLSVFTNFFQFHARFDDFPA). A helical membrane pass occupies residues 119–139 (FTFFLVANAVAAGYLVLSLPF). Over 140-162 (SVVVILRPNKATGGVRLLLLLCD) the chain is Cytoplasmic. Residues 163–183 (VLIMALLTAAGAAAAAIVYVA) traverse the membrane as a helical segment. Residues 184 to 210 (HSGNRRANWVPICMQFHGFCQRTSGSV) lie on the Extracellular side of the membrane. The chain crosses the membrane as a helical span at residues 211–231 (VATFLAVLVFIVLILMAACVI). At 232–235 (RRSK) the chain is on the cytoplasmic side.

The protein belongs to the Casparian strip membrane proteins (CASP) family. As to quaternary structure, homodimer and heterodimers.

The protein resides in the cell membrane. Its function is as follows. Regulates membrane-cell wall junctions and localized cell wall deposition. Required for establishment of the Casparian strip membrane domain (CSD) and the subsequent formation of Casparian strips, a cell wall modification of the root endodermis that determines an apoplastic barrier between the intraorganismal apoplasm and the extraorganismal apoplasm and prevents lateral diffusion. The protein is Casparian strip membrane protein 2 of Sorghum bicolor (Sorghum).